Consider the following 53-residue polypeptide: Large ribosomal subunit protein bL32 (53 aa).

The tract at residues 1–27 is disordered; sequence MAVQQNKKSRSRRDMRRSHDALTTAAV. Basic residues predominate over residues 7 to 16; the sequence is KKSRSRRDMR.

The protein belongs to the bacterial ribosomal protein bL32 family.

In Glaesserella parasuis serovar 5 (strain SH0165) (Haemophilus parasuis), this protein is Large ribosomal subunit protein bL32.